Consider the following 382-residue polypeptide: Galactokinase (382 aa).

Glutamate 34 to aspartate 37 contributes to the substrate binding site. ATP is bound at residue glycine 124 to serine 130. Serine 130 and glutamate 162 together coordinate Mg(2+). Residue aspartate 174 is the Proton acceptor of the active site. Position 223 (tyrosine 223) interacts with substrate.

The protein belongs to the GHMP kinase family. GalK subfamily.

It is found in the cytoplasm. The catalysed reaction is alpha-D-galactose + ATP = alpha-D-galactose 1-phosphate + ADP + H(+). The protein operates within carbohydrate metabolism; galactose metabolism. Catalyzes the transfer of the gamma-phosphate of ATP to D-galactose to form alpha-D-galactose-1-phosphate (Gal-1-P). The sequence is that of Galactokinase from Shigella flexneri serotype 5b (strain 8401).